The following is a 375-amino-acid chain: Trichodiene synthase (375 aa).

Belongs to the trichodiene synthase family.

It catalyses the reaction (2E,6E)-farnesyl diphosphate = trichodiene + diphosphate. The protein operates within sesquiterpene biosynthesis; trichothecene biosynthesis. Functionally, TS is a member of the terpene cyclase group of enzymes. It catalyzes the isomerization and cyclization of farnesyl pyro-phosphate to form trichodiene, the first cyclic intermediate in the biosynthetic pathway for trichothecenes. It serves to branch trichothecene biosynthesis from the isoprenoid pathway. This Fusarium boothii protein is Trichodiene synthase (TRI5).